The primary structure comprises 309 residues: tRNA dimethylallyltransferase (309 aa).

Residue 10-17 (GPTAVGKT) participates in ATP binding. Position 12 to 17 (12 to 17 (TAVGKT)) interacts with substrate. Positions 35–38 (DSMQ) are interaction with substrate tRNA.

This sequence belongs to the IPP transferase family. In terms of assembly, monomer. Mg(2+) serves as cofactor.

It catalyses the reaction adenosine(37) in tRNA + dimethylallyl diphosphate = N(6)-dimethylallyladenosine(37) in tRNA + diphosphate. Functionally, catalyzes the transfer of a dimethylallyl group onto the adenine at position 37 in tRNAs that read codons beginning with uridine, leading to the formation of N6-(dimethylallyl)adenosine (i(6)A). In Clostridium botulinum (strain Alaska E43 / Type E3), this protein is tRNA dimethylallyltransferase.